A 1234-amino-acid polypeptide reads, in one-letter code: Anion exchange protein 2 (1234 aa).

Residues 1–239 (MSSAPRRPAS…YNLQERRRIG (239 aa)) form a disordered region. The Cytoplasmic portion of the chain corresponds to 1–704 (MSSAPRRPAS…SDFRDALDPQ (704 aa)). Basic and acidic residues-rich tracts occupy residues 39–49 (LRTLGVERFEE) and 58–75 (GGEEPGRSYGEEDFEYHR). Basic residues-rich tracts occupy residues 76-85 (QSSHHIHHPL) and 94-110 (RRRKTPQGPGRKPRRRP). The residue at position 113 (S113) is a Phosphoserine. A compositionally biased stretch (acidic residues) spans 120–133 (TIEEGEEDEDEVGE). A phosphoserine mark is found at S145, S171, and S173. The segment covering 207-216 (TAGGDDGGAA) has biased composition (gly residues). S240 is modified (phosphoserine). T254 is subject to Phosphothreonine. An N6-methyllysine modification is found at K271. The interval 287 to 315 (RKNAKGSTQAAREGREPGPTPRARPRAPH) is disordered. S440 bears the Phosphoserine mark. Residues 446–467 (SLLGHHHAQGTESDPHVTEPLI) are disordered. 4 helical membrane passes run 705-728 (CLAAVIFIYFAALSPAITFGGLLG), 734-771 (LIGVSELIMSTALQGVIFCLLGAQPLLVIGFSGPLLVF), 791-813 (VWIGFWLVLLALLMVALEGSFLV), and 823-843 (IFAFLISLIFIYETFYKLIKI). Positions 705–1234 (CLAAVIFIYF…DEYNEMPMPV (530 aa)) are membrane (anion exchange). The Extracellular portion of the chain corresponds to 844 to 893 (FQEHPLHGCSVSNDSEADSSSNNMTWAATTLAPDNSSASGQERPRGQPNT). N856, N866, and N878 each carry an N-linked (GlcNAc...) asparagine glycan. Residues 894–911 (ALLSLVLMAGTFFIAFFL) traverse the membrane as a helical segment. Over 912–926 (RKFKNSRFFPGRIRR) the chain is Cytoplasmic. Helical transmembrane passes span 927-947 (VIGDFGVPIAILIMVLVDYSI), 981-1003 (PFPVWMMVASLLPAVLVFILIFM), 1029-1050 (LLLIVAMGGICALFGLPWLAAA), 1084-1129 (VTGL…IQFY), and 1156-1192 (MHLFTALQLLCLALLWAVMSTAASLAFPFILILTVPL). A lipid anchor (S-palmitoyl cysteine) is attached at C1166.

This sequence belongs to the anion exchanger (TC 2.A.31) family. In terms of tissue distribution, expressed in the parotid and submandibular glands (at protein level). Expressed in the gastric mucosa (at protein level). Expressed in the choroid plexus epithelium (at protein level). Expressed in the liver and gallbladder.

The protein localises to the apical cell membrane. It is found in the basolateral cell membrane. The catalysed reaction is hydrogencarbonate(in) + chloride(out) = hydrogencarbonate(out) + chloride(in). Inhibited by 4,4'-diisothiocyanatostilbene-2,2'-disulfonic acid (DIDS). In terms of biological role, sodium-independent anion exchanger which mediates the electroneutral exchange of chloride for bicarbonate ions across the cell membrane. Plays an important role in osteoclast differentiation and function. Regulates bone resorption and calpain-dependent actin cytoskeleton organization in osteoclasts via anion exchange-dependent control of pH. Essential for intracellular pH regulation in CD8(+) T-cells upon CD3 stimulation, modulating CD8(+) T-cell responses. The chain is Anion exchange protein 2 (Slc4a2) from Rattus norvegicus (Rat).